The primary structure comprises 311 residues: NAD kinase (311 aa).

The active-site Proton acceptor is the D88. NAD(+) is bound by residues D88–G89, N162–E163, R190, D192, V200, and T203–S208.

This sequence belongs to the NAD kinase family. The cofactor is a divalent metal cation.

It localises to the cytoplasm. The enzyme catalyses NAD(+) + ATP = ADP + NADP(+) + H(+). In terms of biological role, involved in the regulation of the intracellular balance of NAD and NADP, and is a key enzyme in the biosynthesis of NADP. Catalyzes specifically the phosphorylation on 2'-hydroxyl of the adenosine moiety of NAD to yield NADP. This is NAD kinase from Rhodopirellula baltica (strain DSM 10527 / NCIMB 13988 / SH1).